Here is a 418-residue protein sequence, read N- to C-terminus: Histidine--tRNA ligase (418 aa).

It belongs to the class-II aminoacyl-tRNA synthetase family. Homodimer.

The protein resides in the cytoplasm. The enzyme catalyses tRNA(His) + L-histidine + ATP = L-histidyl-tRNA(His) + AMP + diphosphate + H(+). This Dehalococcoides mccartyi (strain ATCC BAA-2100 / JCM 16839 / KCTC 5957 / BAV1) protein is Histidine--tRNA ligase.